A 434-amino-acid chain; its full sequence is Nicotinate phosphoribosyltransferase (434 aa).

The residue at position 242 (histidine 242) is a Phosphohistidine; by autocatalysis.

It belongs to the NAPRTase family. Post-translationally, transiently phosphorylated on a His residue during the reaction cycle. Phosphorylation strongly increases the affinity for substrates and increases the rate of nicotinate D-ribonucleotide production. Dephosphorylation regenerates the low-affinity form of the enzyme, leading to product release.

The enzyme catalyses nicotinate + 5-phospho-alpha-D-ribose 1-diphosphate + ATP + H2O = nicotinate beta-D-ribonucleotide + ADP + phosphate + diphosphate. The protein operates within cofactor biosynthesis; NAD(+) biosynthesis; nicotinate D-ribonucleotide from nicotinate: step 1/1. Functionally, catalyzes the synthesis of beta-nicotinate D-ribonucleotide from nicotinate and 5-phospho-D-ribose 1-phosphate at the expense of ATP. The chain is Nicotinate phosphoribosyltransferase from Bradyrhizobium sp. (strain BTAi1 / ATCC BAA-1182).